Reading from the N-terminus, the 432-residue chain is Eukaryotic translation initiation factor 3 subunit M (432 aa).

The PCI domain occupies 184 to 356 (EEEEAYQHIL…KVFLIHSVRY (173 aa)). 2 stretches are compositionally biased toward basic and acidic residues: residues 392 to 401 (AQQEAERKLV) and 423 to 432 (QHRERNDNDD). The tract at residues 392–432 (AQQEAERKLVEASTQHNNDRGNQRRGGNRGQQHRERNDNDD) is disordered.

This sequence belongs to the eIF-3 subunit M family. In terms of assembly, component of the eukaryotic translation initiation factor 3 (eIF-3) complex.

Its subcellular location is the cytoplasm. Functionally, component of the eukaryotic translation initiation factor 3 (eIF-3) complex, which is involved in protein synthesis of a specialized repertoire of mRNAs and, together with other initiation factors, stimulates binding of mRNA and methionyl-tRNAi to the 40S ribosome. The eIF-3 complex specifically targets and initiates translation of a subset of mRNAs involved in cell proliferation. This chain is Eukaryotic translation initiation factor 3 subunit M, found in Pyricularia oryzae (strain 70-15 / ATCC MYA-4617 / FGSC 8958) (Rice blast fungus).